The following is a 650-amino-acid chain: Protein kinase domain-containing protein ppk38 (650 aa).

Positions 33–315 constitute a Protein kinase domain; sequence VTVKRYLAEG…MRNVPIHIYD (283 aa). Disordered stretches follow at residues 344 to 442, 517 to 571, and 591 to 616; these read IHQS…PTTP, KVAA…PTNM, and RRVSKPEKEHTNPNAEQGDVIPEKPM. 2 stretches are compositionally biased toward polar residues: residues 369 to 415 and 533 to 554; these read NVNS…NFRV and SVENPQNNISAPTPSSLQSSNA.

This chain is Protein kinase domain-containing protein ppk38 (ppk38), found in Schizosaccharomyces pombe (strain 972 / ATCC 24843) (Fission yeast).